We begin with the raw amino-acid sequence, 110 residues long: Large ribosomal subunit protein uL22 (110 aa).

It belongs to the universal ribosomal protein uL22 family. In terms of assembly, part of the 50S ribosomal subunit.

In terms of biological role, this protein binds specifically to 23S rRNA; its binding is stimulated by other ribosomal proteins, e.g. L4, L17, and L20. It is important during the early stages of 50S assembly. It makes multiple contacts with different domains of the 23S rRNA in the assembled 50S subunit and ribosome. Its function is as follows. The globular domain of the protein is located near the polypeptide exit tunnel on the outside of the subunit, while an extended beta-hairpin is found that lines the wall of the exit tunnel in the center of the 70S ribosome. This Mycoplasmopsis pulmonis (strain UAB CTIP) (Mycoplasma pulmonis) protein is Large ribosomal subunit protein uL22.